Reading from the N-terminus, the 161-residue chain is Cyclic pyranopterin monophosphate synthase (161 aa).

Residues 78-80 and 116-117 each bind substrate; these read LCH and ME. The active site involves Asp-131.

The protein belongs to the MoaC family. Homohexamer; trimer of dimers.

It carries out the reaction (8S)-3',8-cyclo-7,8-dihydroguanosine 5'-triphosphate = cyclic pyranopterin phosphate + diphosphate. It functions in the pathway cofactor biosynthesis; molybdopterin biosynthesis. Catalyzes the conversion of (8S)-3',8-cyclo-7,8-dihydroguanosine 5'-triphosphate to cyclic pyranopterin monophosphate (cPMP). The protein is Cyclic pyranopterin monophosphate synthase of Bordetella pertussis (strain Tohama I / ATCC BAA-589 / NCTC 13251).